Reading from the N-terminus, the 419-residue chain is 3-isopropylmalate dehydratase large subunit (419 aa).

[4Fe-4S] cluster contacts are provided by Cys300, Cys360, and Cys363.

The protein belongs to the aconitase/IPM isomerase family. LeuC type 2 subfamily. In terms of assembly, heterodimer of LeuC and LeuD. The cofactor is [4Fe-4S] cluster.

The enzyme catalyses (2R,3S)-3-isopropylmalate = (2S)-2-isopropylmalate. Its pathway is amino-acid biosynthesis; L-leucine biosynthesis; L-leucine from 3-methyl-2-oxobutanoate: step 2/4. Its function is as follows. Catalyzes the isomerization between 2-isopropylmalate and 3-isopropylmalate, via the formation of 2-isopropylmaleate. The polypeptide is 3-isopropylmalate dehydratase large subunit (Desulfatibacillum aliphaticivorans).